Reading from the N-terminus, the 197-residue chain is Fe/S biogenesis protein NfuA (197 aa).

[4Fe-4S] cluster contacts are provided by Cys-155 and Cys-158.

It belongs to the NfuA family. As to quaternary structure, homodimer. It depends on [4Fe-4S] cluster as a cofactor.

In terms of biological role, involved in iron-sulfur cluster biogenesis. Binds a 4Fe-4S cluster, can transfer this cluster to apoproteins, and thereby intervenes in the maturation of Fe/S proteins. Could also act as a scaffold/chaperone for damaged Fe/S proteins. This chain is Fe/S biogenesis protein NfuA, found in Pseudomonas savastanoi pv. phaseolicola (strain 1448A / Race 6) (Pseudomonas syringae pv. phaseolicola (strain 1448A / Race 6)).